The following is a 325-amino-acid chain: Probable ABC transporter permease YtrD (325 aa).

8 helical membrane passes run 16–36 (VALVITILVFILGNPLSILNM), 63–83 (SSFISLFWIWGVVLAVSQLGI), 113–133 (MVIVVPQLIGYVLSVLLIMLL), 146–166 (LGMIIVSMLAYSLVMAGGALT), 179–199 (VAISPFLLISLPVINLEILFG), 233–253 (YLVIPAIMTIIFYIIGYISFV), 272–292 (PVQIIVIIIGIMGFGYFGFTA), and 298–318 (GYLIGMGTGAVIGFLISYFAI).

It belongs to the ABC-5 integral membrane protein family. As to quaternary structure, the complex is composed of 2 ATP-binding proteins (YtrB and YtrE), 2 transmembrane proteins (YtrC and YtrD) and a solute-binding protein (YtrF).

It is found in the cell membrane. In terms of biological role, part of the ABC transporter complex YtrBCDEF that plays a role in acetoin utilization during stationary phase and sporulation. This is Probable ABC transporter permease YtrD (ytrD) from Bacillus subtilis (strain 168).